We begin with the raw amino-acid sequence, 387 residues long: Exodeoxyribonuclease 7 large subunit (387 aa).

Belongs to the XseA family. In terms of assembly, heterooligomer composed of large and small subunits.

Its subcellular location is the cytoplasm. It catalyses the reaction Exonucleolytic cleavage in either 5'- to 3'- or 3'- to 5'-direction to yield nucleoside 5'-phosphates.. In terms of biological role, bidirectionally degrades single-stranded DNA into large acid-insoluble oligonucleotides, which are then degraded further into small acid-soluble oligonucleotides. The protein is Exodeoxyribonuclease 7 large subunit of Campylobacter lari (strain RM2100 / D67 / ATCC BAA-1060).